The chain runs to 438 residues: Protein DAY-LENGTH-DEPENDENT DELAYED-GREENING 1, chloroplastic (438 aa).

The transit peptide at Met-1–Pro-54 directs the protein to the chloroplast. The next 4 membrane-spanning stretches (helical) occupy residues Phe-216–Leu-236, Ala-314–Ala-334, Ala-359–Glu-379, and Ile-398–Phe-418.

The protein belongs to the CemA family.

It localises to the plastid. The protein resides in the chloroplast envelope. The protein localises to the chloroplast membrane. The catalysed reaction is K(+)(in) + H(+)(out) = K(+)(out) + H(+)(in). The enzyme catalyses Ca(2+)(in) + H(+)(out) = Ca(2+)(out) + H(+)(in). In terms of biological role, promotes K(+)/H(+) antiport activity supporting K(+) efflux to control H(+) homeostasis in chloroplasts. Also able to ensure Ca(2+)/H(+) antiport activity in vitro. Essential for chloroplast pH regulation and optimization of non-photochemical quenching (NPQ), a regulatory mechanism that dissipates excess light energy; acts downstream of PSBS but independently from PGR5 and FLAP1. In Arabidopsis thaliana (Mouse-ear cress), this protein is Protein DAY-LENGTH-DEPENDENT DELAYED-GREENING 1, chloroplastic.